A 144-amino-acid chain; its full sequence is Small ribosomal subunit protein uS12 (144 aa).

The residue at position 103 (aspartate 103) is a 3-methylthioaspartic acid. The disordered stretch occupies residues 125–144; the sequence is QQGRSRYGAKKGKAAPAKKK. Residues 131–144 are compositionally biased toward basic residues; it reads YGAKKGKAAPAKKK.

It belongs to the universal ribosomal protein uS12 family. In terms of assembly, part of the 30S ribosomal subunit. Contacts proteins S8 and S17. May interact with IF1 in the 30S initiation complex.

Functionally, with S4 and S5 plays an important role in translational accuracy. Its function is as follows. Interacts with and stabilizes bases of the 16S rRNA that are involved in tRNA selection in the A site and with the mRNA backbone. Located at the interface of the 30S and 50S subunits, it traverses the body of the 30S subunit contacting proteins on the other side and probably holding the rRNA structure together. The combined cluster of proteins S8, S12 and S17 appears to hold together the shoulder and platform of the 30S subunit. The polypeptide is Small ribosomal subunit protein uS12 (Dehalococcoides mccartyi (strain ATCC BAA-2100 / JCM 16839 / KCTC 5957 / BAV1)).